The primary structure comprises 179 residues: Large ribosomal subunit protein uL16 (179 aa).

Positions 147–179 are disordered; sequence KASSASLANLDEDANSQTDDETSSSGSVATVES. The segment covering 156–168 has biased composition (acidic residues); the sequence is LDEDANSQTDDET. Residues 169-179 are compositionally biased toward polar residues; it reads SSSGSVATVES.

This sequence belongs to the universal ribosomal protein uL16 family. In terms of assembly, part of the 50S ribosomal subunit.

Its function is as follows. Binds 23S rRNA and is also seen to make contacts with the A and possibly P site tRNAs. In Prochlorococcus marinus (strain MIT 9211), this protein is Large ribosomal subunit protein uL16.